A 464-amino-acid chain; its full sequence is Septin homolog spn5 (464 aa).

A disordered region spans residues 28 to 91 (QVDESSAKRS…VPNSNGKSIP (64 aa)). Composition is skewed to basic and acidic residues over residues 41 to 54 (ESRK…KEQI) and 69 to 81 (TAKD…KQDE). Positions 115-370 (NGIDINLIVV…DTFRTEKLVA (256 aa)) constitute a Septin-type G domain. Residues 125 to 132 (GESSLGKT) form a G1 motif region. GTP-binding positions include 125-132 (GESSLGKT), threonine 151, glycine 177, 257-265 (KADTMTSDE), glycine 304, and arginine 319. Residues 174 to 177 (DTPG) are G3 motif. Residues 256–259 (GKAD) are G4 motif. Residues 396–453 (LVEEALTKVMKEKYREKENNLELLETNLKTHHKDYKHALKKRITALEEEKNRLIKEIG) are a coiled coil.

It belongs to the TRAFAC class TrmE-Era-EngA-EngB-Septin-like GTPase superfamily. Septin GTPase family. As to quaternary structure, component of the sporulation-specific septin complex composed of at least spn2, spn5, spn6 and spn7.

The protein localises to the nucleus. Its subcellular location is the forespore membrane. Septin-like protein involved in the correct orientation of forespore membrane extension during sporulation. The chain is Septin homolog spn5 (spn5) from Schizosaccharomyces pombe (strain 972 / ATCC 24843) (Fission yeast).